Reading from the N-terminus, the 338-residue chain is m7GpppX diphosphatase (338 aa).

Residues 1 to 36 (MADTAPQLKRKREQEAEEAETPSTEEKEAGVGNGTS) form a disordered region. Residue Ala-2 is modified to N-acetylalanine. Positions 9 to 12 (KRKR) match the nuclear localization signal (NLS) motif. Phosphoserine is present on residues Ser-23 and Ser-100. Residues Lys-137 and Lys-141 each carry the N6-acetyllysine modification. The short motif at 141–153 (KYMRQDLRLIRET) is the nuclear export sequence (NES) element. Residues Trp-174, Glu-184, Asp-204, Lys-206, and 267-278 (HYLPSYYHLHVH) contribute to the substrate site. The Histidine triad motif motif lies at 274–278 (HLHVH). The Nucleophile role is filled by His-276.

Belongs to the HIT family. Homodimer. Associates with components of the exosome multienzyme ribonuclease complex, such as EXOSC3 and EXOSC4. Interacts with NDOR1.

Its subcellular location is the cytoplasm. The protein localises to the nucleus. The catalysed reaction is a 5'-end (N(7)-methyl 5'-triphosphoguanosine)-ribonucleoside in mRNA + H2O = N(7)-methyl-GMP + a 5'-end diphospho-ribonucleoside in mRNA + 2 H(+). With respect to regulation, the hydrolytic product 7-methylguanosine diphosphate (m7GDP) efficiently inhibits the decapping scavenger activity and acts as a competitive inhibitor in vitro. Inhibited by 2,4-diaminoquinazoline. Functionally, decapping scavenger enzyme that catalyzes the cleavage of a residual cap structure following the degradation of mRNAs by the 3'-&gt;5' exosome-mediated mRNA decay pathway. Hydrolyzes cap analog structures like 7-methylguanosine nucleoside triphosphate (m7GpppG) with up to 10 nucleotide substrates (small capped oligoribonucleotides) and specifically releases 5'-phosphorylated RNA fragments and 7-methylguanosine monophosphate (m7GMP). Cleaves cap analog structures like tri-methyl guanosine nucleoside triphosphate (m3(2,2,7)GpppG) with very poor efficiency. Does not hydrolyze unmethylated cap analog (GpppG) and shows no decapping activity on intact m7GpppG-capped mRNA molecules longer than 25 nucleotides. Does not hydrolyze 7-methylguanosine diphosphate (m7GDP) to m7GMP. May also play a role in the 5'-&gt;3 mRNA decay pathway; m7GDP, the downstream product released by the 5'-&gt;3' mRNA mediated decapping activity, may be also converted by DCPS to m7GMP. Binds to m7GpppG and strongly to m7GDP. Plays a role in first intron splicing of pre-mRNAs. Inhibits activation-induced cell death. In Mus musculus (Mouse), this protein is m7GpppX diphosphatase (Dcps).